Reading from the N-terminus, the 173-residue chain is Lectin BRA-2 (173 aa).

A glycan (N-linked (GlcNAc...) asparagine) is linked at Asn-39. 3 disulfide bridges follow: Cys-47–Cys-61, Cys-78–Cys-168, and Cys-144–Cys-160. The region spanning 51–170 is the C-type lectin domain; it reads PNGWVTSENK…NDRYNFVCEI (120 aa).

In terms of assembly, homohexamer; disulfide-linked. Coelemic fluid.

Sugar-binding protein which recognizes specific carbohydrate structures and agglutinates a variety of animal cells by binding to cell-surface glycoproteins and glycolipids. Calcium-dependent lectin. Invertebrate lectins may be involved in defense functions. In Megabalanus rosa (Acorn barnacle), this protein is Lectin BRA-2.